The following is a 342-amino-acid chain: MSEAIKTDVLIIGAGPCGLFAVFELGLLDIKAHLIDILDKVGGQCAELYPEKPIYDIPGVPMVTGQGLTDQLMEQIKPFSPTFHLGEMVSNVEKIGDPGFRVTTDAGKVFECKVVVIAAGGGSFQPKRPPVPGIEAYEGTSVFYAVRKMEQFRGKNVVIVGGGDSALDWTLNLHPIAKRIALIHRRDDFRAAPHSVEQMRALVASGKMDLRIGQVTALEGTNGQLSAATIKGNDNAVETIPCEMMLPFFGLTMKLGPVADWGIALEHNLIPVETSAFETSVPGIFAIGDINTYPGKIKLILCGFHEGALMAQKAHRYVYPEKRLVFQYTTSSSSLQKKLGVN.

Residues cysteine 17, aspartate 36, glutamine 44, tyrosine 49, valine 89, phenylalanine 124, aspartate 289, and threonine 330 each coordinate FAD.

Belongs to the ferredoxin--NADP reductase type 2 family. As to quaternary structure, homodimer. FAD is required as a cofactor.

The catalysed reaction is 2 reduced [2Fe-2S]-[ferredoxin] + NADP(+) + H(+) = 2 oxidized [2Fe-2S]-[ferredoxin] + NADPH. The protein is Ferredoxin--NADP reductase of Bradyrhizobium sp. (strain ORS 278).